Reading from the N-terminus, the 337-residue chain is Monoacylglycerol lipase ABHD6 (337 aa).

Residues 1–8 (MDLDVVNM) lie on the Extracellular side of the membrane. A helical; Signal-anchor for type II membrane protein transmembrane segment spans residues 9 to 29 (FVIAGGTLAIPILAFVASFLL). Topologically, residues 30–337 (WPSALIRIYY…HNPDNNKKLN (308 aa)) are cytoplasmic. Ser-148 acts as the Nucleophile in catalysis. Catalysis depends on charge relay system residues Asp-278 and His-306.

The protein belongs to the AB hydrolase superfamily.

It is found in the late endosome membrane. It localises to the lysosome membrane. The protein localises to the mitochondrion membrane. The enzyme catalyses Hydrolyzes glycerol monoesters of long-chain fatty acids.. It carries out the reaction 1-octanoylglycerol + H2O = octanoate + glycerol + H(+). It catalyses the reaction 1-decanoylglycerol + H2O = decanoate + glycerol + H(+). The catalysed reaction is 1-dodecanoylglycerol + H2O = dodecanoate + glycerol + H(+). The enzyme catalyses 1-tetradecanoylglycerol + H2O = tetradecanoate + glycerol + H(+). It carries out the reaction 2-hexadecanoylglycerol + H2O = glycerol + hexadecanoate + H(+). It catalyses the reaction 2-(9Z-octadecenoyl)-glycerol + H2O = glycerol + (9Z)-octadecenoate + H(+). The catalysed reaction is 1-(9Z-octadecenoyl)-glycerol + H2O = glycerol + (9Z)-octadecenoate + H(+). The enzyme catalyses 2-(9Z,12Z-octadecadienoyl)-glycerol + H2O = (9Z,12Z)-octadecadienoate + glycerol + H(+). It carries out the reaction 2-(5Z,8Z,11Z,14Z-eicosatetraenoyl)-glycerol + H2O = glycerol + (5Z,8Z,11Z,14Z)-eicosatetraenoate + H(+). It catalyses the reaction 1-(5Z,8Z,11Z,14Z-eicosatetraenoyl)-glycerol + H2O = glycerol + (5Z,8Z,11Z,14Z)-eicosatetraenoate + H(+). The catalysed reaction is 1-(9Z,12Z-octadecadienoyl)-glycerol + H2O = (9Z,12Z)-octadecadienoate + glycerol + H(+). The enzyme catalyses 3-(9Z-octadecenoyl)-sn-glycero-1-phospho-(3'-(9Z-octadecenoyl)-1'-sn-glycerol) + H2O = 3-(9Z-octadecenoyl)-sn-glycero-1-phospho-(1'-sn-glycerol) + (9Z)-octadecenoate + H(+). It carries out the reaction (S,S)-2-(9Z-octadecenoyl)-sn-glycero-1-phospho-(2'-(9Z-octadecenoyl)-1'-sn-glycerol) + H2O = (S,S)-2-(9Z-octadecenoyl)-sn-glycero-1-phospho-(1'-sn-glycerol) + (9Z)-octadecenoate + H(+). It catalyses the reaction (R,R)-2-(9Z-octadecenoyl)-sn-glycero-3-phospho-(2'-(9Z-octadecenoyl)-3'-sn-glycerol) + H2O = (R,R)-2-(9Z-octadecenoyl)-sn-glycero-3-phospho-(3'-sn-glycerol) + (9Z)-octadecenoate + H(+). Functionally, lipase that preferentially hydrolysis medium-chain saturated monoacylglycerols including 2-arachidonoylglycerol. Through 2-arachidonoylglycerol degradation may regulate endocannabinoid signaling pathways. Also has a lysophosphatidyl lipase activity with a preference for lysophosphatidylglycerol among other lysophospholipids. Also able to degrade bis(monoacylglycero)phosphate (BMP) and constitutes the major enzyme for BMP catabolism. BMP, also known as lysobisphosphatidic acid, is enriched in late endosomes and lysosomes and plays a key role in the formation of intraluminal vesicles and in lipid sorting. In Rattus norvegicus (Rat), this protein is Monoacylglycerol lipase ABHD6.